We begin with the raw amino-acid sequence, 81 residues long: Cell division protein ZapB (81 aa).

The stretch at 5-81 (LEVFEKLESK…QALLGRMEEV (77 aa)) forms a coiled coil. Positions 43–64 (VQSAQHGREELERENSQLKEQQ) are disordered. The segment covering 48–59 (HGREELERENSQ) has biased composition (basic and acidic residues).

The protein belongs to the ZapB family. In terms of assembly, homodimer. The ends of the coiled-coil dimer bind to each other, forming polymers. Interacts with FtsZ.

The protein localises to the cytoplasm. Non-essential, abundant cell division factor that is required for proper Z-ring formation. It is recruited early to the divisome by direct interaction with FtsZ, stimulating Z-ring assembly and thereby promoting cell division earlier in the cell cycle. Its recruitment to the Z-ring requires functional FtsA or ZipA. The protein is Cell division protein ZapB of Klebsiella pneumoniae subsp. pneumoniae (strain ATCC 700721 / MGH 78578).